A 562-amino-acid polypeptide reads, in one-letter code: Sulfite reductase [NADPH] hemoprotein beta-component (562 aa).

The [4Fe-4S] cluster site is built by C426, C432, C471, and C475. Siroheme is bound at residue C475.

It belongs to the nitrite and sulfite reductase 4Fe-4S domain family. As to quaternary structure, alpha(8)-beta(8). The alpha component is a flavoprotein, the beta component is a hemoprotein. Siroheme serves as cofactor. It depends on [4Fe-4S] cluster as a cofactor.

It catalyses the reaction hydrogen sulfide + 3 NADP(+) + 3 H2O = sulfite + 3 NADPH + 4 H(+). It participates in sulfur metabolism; hydrogen sulfide biosynthesis; hydrogen sulfide from sulfite (NADPH route): step 1/1. Its function is as follows. Component of the sulfite reductase complex that catalyzes the 6-electron reduction of sulfite to sulfide. This is one of several activities required for the biosynthesis of L-cysteine from sulfate. The protein is Sulfite reductase [NADPH] hemoprotein beta-component of Shewanella denitrificans (strain OS217 / ATCC BAA-1090 / DSM 15013).